The following is a 490-amino-acid chain: Tandem C2 domains nuclear protein (490 aa).

A phosphoserine mark is found at serine 83, serine 156, serine 168, serine 174, and serine 211. The segment at 189-215 (HDSLSSVPSSSSSRKNSQGSNRSLDTI) is disordered. A compositionally biased stretch (low complexity) spans 192 to 211 (LSSVPSSSSSRKNSQGSNRS). Residues threonine 214 and threonine 216 each carry the phosphothreonine modification. A Phosphoserine modification is found at serine 218. 2 consecutive C2 domains span residues 223 to 342 (DFGR…SLDI) and 344 to 471 (PPSK…NQWK). The Nuclear localization signal motif lies at 447–449 (RRK).

It localises to the nucleus. This chain is Tandem C2 domains nuclear protein (TC2N), found in Homo sapiens (Human).